The primary structure comprises 1138 residues: Protein RECOGNITION OF PERONOSPORA PARASITICA 7 (1138 aa).

The NB-ARC domain occupies 166–422; it reads EENVKKLVGY…CNYVLSLSFE (257 aa). Position 189 to 196 (189 to 196) interacts with ATP; the sequence is GMGGLGKT. LRR repeat units lie at residues 544-565, 566-581, 582-606, 607-631, 655-680, 681-705, 707-726, 727-752, 754-774, 775-797, 798-825, 847-871, 873-893, 894-918, 940-963, 1028-1050, 1055-1078, 1079-1103, and 1115-1138; these read QYPTTLHVEKDINNPKLRSLVV, VTLGSWNMAGSSFTRL, ELLRVLDLVQAKLKGGKLASCIGKL, IHLRYLSLEYAEVTHIPYSLGNLKL, MQELRYLALPSLIERKTKLELSNLVK, LETLENFSTKNSSLEDLRGMVRLRT, TIELIEETSLETLAASIGGL, KYLEKLEIDDLGSKMRTKEAGIVFDF, HLKRLRLELYMPRLSKEQHFP, SHLTTLYLQHCRLEEDPMPILEK, LLQLKELELGHKSFSGKKMVCSSCGFPQ, MPLLLTLNIFDCRKLKQLPDEHLPS, LTAISLKKCGLEDPIPTLERL, VHLKELSLSELCGRIMVCTGGGFPQ, MPRLHTLEIRRCLKLKKLPNGFPQ, LEKLLHLKNVSLFQSFSGKRMVC, FPQLQKLSIREIEWEEWIVEQGSM, PLLHTLYIGVCPNLKELPDGLRFIY, and KKRLSEGGEDYYKVQHIPSVEFDD.

Belongs to the disease resistance NB-LRR family.

In terms of biological role, disease resistance protein required for incompatible interactions with avirulent strains of Hyaloperonospora arabidopsidis (downy mildew), isolate Hpa-Hiks1 in cv. Columbia. This Arabidopsis thaliana (Mouse-ear cress) protein is Protein RECOGNITION OF PERONOSPORA PARASITICA 7.